The chain runs to 124 residues: Sulfiredoxin (124 aa).

This sequence belongs to the sulfiredoxin family. In terms of assembly, interacts with tpx1 in response to oxidative stress.

It is found in the cytoplasm. Its subcellular location is the nucleus. The catalysed reaction is S-hydroxy-S-oxy-L-cysteinyl-[peroxiredoxin] + [protein]-dithiol + ATP = S-hydroxy-L-cysteinyl-[peroxiredoxin] + [protein]-disulfide + ADP + phosphate. In terms of biological role, contributes to oxidative stress resistance by reducing cysteine-sulfinic acid formed under exposure to oxidants in a peroxiredoxin. May catalyze the reduction in a multi-step process by acting both as a specific phosphotransferase and a thioltransferase. This chain is Sulfiredoxin (srx1), found in Schizosaccharomyces pombe (strain 972 / ATCC 24843) (Fission yeast).